A 178-amino-acid chain; its full sequence is Adenine phosphoribosyltransferase (178 aa).

The protein belongs to the purine/pyrimidine phosphoribosyltransferase family. In terms of assembly, homodimer.

Its subcellular location is the cytoplasm. The catalysed reaction is AMP + diphosphate = 5-phospho-alpha-D-ribose 1-diphosphate + adenine. It functions in the pathway purine metabolism; AMP biosynthesis via salvage pathway; AMP from adenine: step 1/1. In terms of biological role, catalyzes a salvage reaction resulting in the formation of AMP, that is energically less costly than de novo synthesis. The polypeptide is Adenine phosphoribosyltransferase (Helicobacter hepaticus (strain ATCC 51449 / 3B1)).